A 604-amino-acid chain; its full sequence is MRPMTPRDKIRNFSIIAHIDHGKSTLADRLIQACGGLTDREMSEQVLDSMDIEKERGITIKAQTVRLSYTASDGETYTLNLMDTPGHVDFAYEVSRCLAACEGSLLVVDASQGVEAQTLANVYQAIDQNHEIVPVLNKIDLPAADVDRVKEQIEEIIGLDASDAVQISAKTGLGIPDVLEAIVNRLPPPRGGDHTAPLKAALVDAYYDPYLGVVVIVRVHEGILKKKQTIRMMRTGGVYEIDKVGTFNPKLTEADALGPGEVGYFVASIKEVGDCSIGDTITEDKRPTDKALPGYKDVQPVVFCGLFPMDAGDFDDLRAAMGKLRLNDASFTWEMETSAALGMGFRCGFLGLLHLEIIQERLSREFDLDLIATAPSVVYEMSMTDGTEIELHNPADMPDVVRITEIREPWIAATIYTPDEYLGSILKLCQDRRGIQIELSYVGGRACVKYELPLNEVVFDFYDRLKSISRGYASFDYTLIGHRAENLVKLQILVNEEPVDALAMLVHRDRAESRGRQMCERLKELIPRQMFKIPIQAAIGGRVVARETISAMRKDVTAKCYGGDATRKRKLLDKQAAGKKRMRQFGKVEIPQEAFVAALRMDGD.

The tr-type G domain maps to 8–190 (DKIRNFSIIA…AIVNRLPPPR (183 aa)). Residues 20-25 (DHGKST) and 137-140 (NKID) contribute to the GTP site.

It belongs to the TRAFAC class translation factor GTPase superfamily. Classic translation factor GTPase family. LepA subfamily.

Its subcellular location is the cell inner membrane. It carries out the reaction GTP + H2O = GDP + phosphate + H(+). Its function is as follows. Required for accurate and efficient protein synthesis under certain stress conditions. May act as a fidelity factor of the translation reaction, by catalyzing a one-codon backward translocation of tRNAs on improperly translocated ribosomes. Back-translocation proceeds from a post-translocation (POST) complex to a pre-translocation (PRE) complex, thus giving elongation factor G a second chance to translocate the tRNAs correctly. Binds to ribosomes in a GTP-dependent manner. This Hyphomonas neptunium (strain ATCC 15444) protein is Elongation factor 4.